A 406-amino-acid polypeptide reads, in one-letter code: MSFQMKYDIRLRFEVEGIVEKTDVIGAIFGQTENLFGDEFDLRELQDKGRLGRIIVEVKTKGGKSEGEIIIPSNLDRIETALIAAMVESVDKVGPYNSKFELIEIEDIRAEKLKKIIERAKGILSSWSKEKSLDIKEVINEISSAVKVGEITEYGPERLPAGPDVDKDPNLIIVEGRADVINLLRYGYKNVIAVEGATSRIPETLINLSKMKKTVIAFLDGDHGGDLILKELLSNNVKIDFVARAPIGREVEELTGKEIAKALSNMMPLTQYLKKVQEAEQAIAKNVIAKEEKPIQSETTQQVVQITLPQNILEEIKKLPGTLEGVLYDNNWNLIEKVQVRDIIPKLEAYEDNKVAYIIFDGVITQRLLDLASQKNIKMIIGARIGGINKRPQNVDILTFTDIISS.

In terms of domain architecture, Toprim spans 169 to 247 (PNLIIVEGRA…KIDFVARAPI (79 aa)). 3 residues coordinate Mg(2+): Glu175, Asp220, and Asp222.

The protein belongs to the archaeal DnaG primase family. In terms of assembly, forms a ternary complex with MCM helicase and DNA. Component of the archaeal exosome complex. Interacts with Csl4 but not with Rrp4. Mg(2+) is required as a cofactor.

It carries out the reaction ssDNA + n NTP = ssDNA/pppN(pN)n-1 hybrid + (n-1) diphosphate.. Functionally, RNA polymerase that catalyzes the synthesis of short RNA molecules used as primers for DNA polymerase during DNA replication. Can use NTPs but not dNTPs. Binds DNA. Also part of the exosome, which is a complex involved in RNA degradation. Acts as a poly(A)-binding protein that enhances the interaction between heteromeric, adenine-rich transcripts and the exosome. The chain is DNA primase DnaG from Saccharolobus solfataricus (strain ATCC 35092 / DSM 1617 / JCM 11322 / P2) (Sulfolobus solfataricus).